Consider the following 688-residue polypeptide: Glycine--tRNA ligase beta subunit (688 aa).

This sequence belongs to the class-II aminoacyl-tRNA synthetase family. As to quaternary structure, tetramer of two alpha and two beta subunits.

The protein resides in the cytoplasm. The enzyme catalyses tRNA(Gly) + glycine + ATP = glycyl-tRNA(Gly) + AMP + diphosphate. This chain is Glycine--tRNA ligase beta subunit, found in Histophilus somni (strain 129Pt) (Haemophilus somnus).